Here is a 57-residue protein sequence, read N- to C-terminus: Small ribosomal subunit protein eS27 (57 aa).

Residues C10, C13, C29, and C32 each contribute to the Zn(2+) site. The C4-type zinc-finger motif lies at C10–C32.

The protein belongs to the eukaryotic ribosomal protein eS27 family. As to quaternary structure, part of the 30S ribosomal subunit. The cofactor is Zn(2+).

The protein is Small ribosomal subunit protein eS27 of Halorubrum lacusprofundi (strain ATCC 49239 / DSM 5036 / JCM 8891 / ACAM 34).